A 408-amino-acid polypeptide reads, in one-letter code: Sex comb on midleg-like protein 4 (408 aa).

Phosphoserine is present on residues Ser-55 and Ser-65. The disordered stretch occupies residues 274-338 (AGGPATTTSG…TRRPSSRNPS (65 aa)). Over residues 278–287 (ATTTSGSRTN) the composition is skewed to polar residues. Positions 288-306 (PVPSGGSSSPGLRLPASSP) are enriched in low complexity. The 67-residue stretch at 340-406 (WTVEDVVRFV…CYHIDKLKQA (67 aa)) folds into the SAM domain.

Belongs to the SCM family.

Its subcellular location is the nucleus. Functionally, putative Polycomb group (PcG) protein. PcG proteins act by forming multiprotein complexes, which are required to maintain the transcriptionally repressive state of homeotic genes throughout development. In Mus musculus (Mouse), this protein is Sex comb on midleg-like protein 4 (Scml4).